Reading from the N-terminus, the 296-residue chain is Protein-export membrane protein SecF (296 aa).

The next 6 helical transmembrane spans lie at 23 to 43 (MIIY…ANYV), 144 to 164 (AIVY…RVPV), 169 to 189 (VVFS…IFGI), 194 to 214 (ATIA…ILLT), 236 to 256 (GFTM…FSTA), and 265 to 285 (VLIF…AGVL).

It belongs to the SecD/SecF family. SecF subfamily. As to quaternary structure, part of the protein translocation apparatus. Forms a complex with SecD.

It is found in the cell membrane. Its function is as follows. Involved in protein export. This chain is Protein-export membrane protein SecF, found in Pyrococcus furiosus (strain ATCC 43587 / DSM 3638 / JCM 8422 / Vc1).